Consider the following 202-residue polypeptide: Peptide deformylase (202 aa).

Residues Cys-121 and His-163 each coordinate Fe cation. The active site involves Glu-164. His-167 provides a ligand contact to Fe cation.

This sequence belongs to the polypeptide deformylase family. It depends on Fe(2+) as a cofactor.

The catalysed reaction is N-terminal N-formyl-L-methionyl-[peptide] + H2O = N-terminal L-methionyl-[peptide] + formate. Functionally, removes the formyl group from the N-terminal Met of newly synthesized proteins. Requires at least a dipeptide for an efficient rate of reaction. N-terminal L-methionine is a prerequisite for activity but the enzyme has broad specificity at other positions. The sequence is that of Peptide deformylase from Synechococcus sp. (strain CC9311).